A 334-amino-acid chain; its full sequence is Anthranilate phosphoribosyltransferase (334 aa).

5-phospho-alpha-D-ribose 1-diphosphate-binding positions include glycine 79, 82–83 (GD), serine 87, 89–92 (NIST), 107–115 (KAGNRSISS), and serine 119. Anthranilate is bound at residue glycine 79. Residue serine 91 participates in Mg(2+) binding. Position 110 (asparagine 110) interacts with anthranilate. Residue arginine 165 coordinates anthranilate. The Mg(2+) site is built by aspartate 224 and glutamate 225.

This sequence belongs to the anthranilate phosphoribosyltransferase family. As to quaternary structure, homodimer. Mg(2+) is required as a cofactor.

It carries out the reaction N-(5-phospho-beta-D-ribosyl)anthranilate + diphosphate = 5-phospho-alpha-D-ribose 1-diphosphate + anthranilate. It functions in the pathway amino-acid biosynthesis; L-tryptophan biosynthesis; L-tryptophan from chorismate: step 2/5. Functionally, catalyzes the transfer of the phosphoribosyl group of 5-phosphorylribose-1-pyrophosphate (PRPP) to anthranilate to yield N-(5'-phosphoribosyl)-anthranilate (PRA). The sequence is that of Anthranilate phosphoribosyltransferase from Streptococcus thermophilus (strain ATCC BAA-491 / LMD-9).